A 293-amino-acid chain; its full sequence is TBC1 domain family member 7 (293 aa).

The Rab-GAP TBC domain occupies 50–231 (PLPSMYRALV…RVWDKVVSGS (182 aa)).

In terms of assembly, component of the TSC-TBC complex (also named Rhebulator complex), composed of 2 molecules of TSC1, 2 molecules of TSC2 and 1 molecule of TBC1D7. Interacts with TSC1 (via C-terminal half of the coiled-coil domain). In terms of tissue distribution, highly expressed in heart, and slightly in kidney, liver and placenta.

The protein localises to the lysosome membrane. It localises to the cytoplasmic vesicle. Its subcellular location is the cytoplasm. The protein resides in the cytosol. Functionally, non-catalytic component of the TSC-TBC complex, a multiprotein complex that acts as a negative regulator of the canonical mTORC1 complex, an evolutionarily conserved central nutrient sensor that stimulates anabolic reactions and macromolecule biosynthesis to promote cellular biomass generation and growth. The TSC-TBC complex acts as a GTPase-activating protein (GAP) for the small GTPase RHEB, a direct activator of the protein kinase activity of mTORC1. In absence of nutrients, the TSC-TBC complex inhibits mTORC1, thereby preventing phosphorylation of ribosomal protein S6 kinase (RPS6KB1 and RPS6KB2) and EIF4EBP1 (4E-BP1) by the mTORC1 signaling. The TSC-TBC complex is inactivated in response to nutrients, relieving inhibition of mTORC1. This Homo sapiens (Human) protein is TBC1 domain family member 7.